The primary structure comprises 415 residues: uncharacterized protein (415 aa).

Disordered stretches follow at residues 329–351 (KFNKPNNDDLQNESGDDSETESS) and 388–415 (KSMMNKSESNKKSNRKSNKRSNKNIITL). A compositionally biased stretch (acidic residues) spans 338-348 (LQNESGDDSET). The segment covering 399-409 (KSNRKSNKRSN) has biased composition (basic residues).

This is an uncharacterized protein from Acanthamoeba polyphaga mimivirus (APMV).